We begin with the raw amino-acid sequence, 425 residues long: Glutamate-1-semialdehyde 2,1-aminomutase (425 aa).

The residue at position 265 (Lys265) is an N6-(pyridoxal phosphate)lysine.

The protein belongs to the class-III pyridoxal-phosphate-dependent aminotransferase family. HemL subfamily. As to quaternary structure, homodimer. Requires pyridoxal 5'-phosphate as cofactor.

It localises to the cytoplasm. It catalyses the reaction (S)-4-amino-5-oxopentanoate = 5-aminolevulinate. The protein operates within porphyrin-containing compound metabolism; protoporphyrin-IX biosynthesis; 5-aminolevulinate from L-glutamyl-tRNA(Glu): step 2/2. The chain is Glutamate-1-semialdehyde 2,1-aminomutase from Psychromonas ingrahamii (strain DSM 17664 / CCUG 51855 / 37).